Here is a 205-residue protein sequence, read N- to C-terminus: Cell wall / vacuolar inhibitor of fructosidase 1 (205 aa).

The N-terminal stretch at 1–23 is a signal peptide; that stretch reads MKMMKVMMLIVMMMMVMVMVSEG. Cystine bridges form between Cys-30-Cys-39 and Cys-93-Cys-134. Asn-139 and Asn-156 each carry an N-linked (GlcNAc...) asparagine glycan.

The protein belongs to the PMEI family. As to expression, mostly expressed in roots, senescent leaves and flowers (in sepals), and, to a lower extent, in stems, specifically in the vascular tissues (e.g. in the phloem).

It is found in the vacuole. Functionally, inhibits fructosidases from vacuoles (vacuolar invertase VI). This is Cell wall / vacuolar inhibitor of fructosidase 1 (C/VIF1) from Arabidopsis thaliana (Mouse-ear cress).